The sequence spans 756 residues: Ribonucleoside-diphosphate reductase subunit alpha (756 aa).

The region spanning 5–95 (LMVTKRDGTQ…IFHLRKKAYG (91 aa)) is the ATP-cone domain. ATP is bound by residues Lys-9, 15–21 (EQINLDK), Thr-55, and Lys-91. Position 209 (Thr-209) interacts with GDP. An intrachain disulfide couples Cys-225 to Cys-462. DTTP is bound by residues 232–234 (DSL), Arg-262, and Arg-269. Asn-437 is a binding site for GDP. The active-site Proton acceptor is the Asn-437. Catalysis depends on Cys-439, which acts as the Cysteine radical intermediate. Residues Glu-441 and 623–625 (ETS) contribute to the GDP site. Glu-441 acts as the Proton acceptor in catalysis.

It belongs to the ribonucleoside diphosphate reductase large chain family. As to quaternary structure, tetramer of two alpha and two beta subunits.

It carries out the reaction a 2'-deoxyribonucleoside 5'-diphosphate + [thioredoxin]-disulfide + H2O = a ribonucleoside 5'-diphosphate + [thioredoxin]-dithiol. Its activity is regulated as follows. Under complex allosteric control mediated by deoxynucleoside triphosphates and ATP binding to separate specificity and activation sites on the alpha subunit. The type of nucleotide bound at the specificity site determines substrate preference. It seems probable that ATP makes the enzyme reduce CDP and UDP, dGTP favors ADP reduction and dTTP favors GDP reduction. Stimulated by ATP and inhibited by dATP binding to the activity site. In terms of biological role, provides the precursors necessary for DNA synthesis. Catalyzes the biosynthesis of deoxyribonucleotides from the corresponding ribonucleotides. In Haemophilus influenzae (strain ATCC 51907 / DSM 11121 / KW20 / Rd), this protein is Ribonucleoside-diphosphate reductase subunit alpha (nrdA).